An 836-amino-acid chain; its full sequence is Serine/threonine-protein kinase ATG1 (836 aa).

A Protein kinase domain is found at 21–321 (YTVEKEIGKG…FNEFFNNEVV (301 aa)). ATP is bound by residues 27–35 (IGKGSFAIV) and lysine 50. Aspartate 168 acts as the Proton acceptor in catalysis. Disordered stretches follow at residues 387–425 (EHYRERQDLQGQQQQQQQHPDSPPRGSTQGYQSSAGQTR), 458–489 (NNGPTTNNQGAQIIKPLRYRTSSSSDGHGGRR), and 619–642 (CAIDDDDDLDSGNPSSNQTLTPGA). Residues 395 to 404 (LQGQQQQQQQ) are compositionally biased toward low complexity. Composition is skewed to polar residues over residues 411 to 425 (RGSTQGYQSSAGQTR), 459 to 468 (NGPTTNNQGA), and 630 to 640 (GNPSSNQTLTP). An interaction with ATG13 region spans residues 571–836 (ITPFVESLSA…RLKALKSKMS (266 aa)).

The protein belongs to the protein kinase superfamily. Ser/Thr protein kinase family. APG1/unc-51/ULK1 subfamily. As to quaternary structure, homodimer. Dimerization requires the presence of ATG13. Forms a ternary complex with ATG13 and ATG17.

The protein localises to the cytoplasm. Its subcellular location is the preautophagosomal structure membrane. The catalysed reaction is L-seryl-[protein] + ATP = O-phospho-L-seryl-[protein] + ADP + H(+). The enzyme catalyses L-threonyl-[protein] + ATP = O-phospho-L-threonyl-[protein] + ADP + H(+). Serine/threonine protein kinase involved in the cytoplasm to vacuole transport (Cvt) and found to be essential in autophagy, where it is required for the formation of autophagosomes. Involved in the clearance of protein aggregates which cannot be efficiently cleared by the proteasome. Required for selective autophagic degradation of the nucleus (nucleophagy) as well as for mitophagy which contributes to regulate mitochondrial quantity and quality by eliminating the mitochondria to a basal level to fulfill cellular energy requirements and preventing excess ROS production. Also involved in endoplasmic reticulum-specific autophagic process, in selective removal of ER-associated degradation (ERAD) substrates. Plays a key role in ATG9 and ATG23 cycling through the pre-autophagosomal structure and is necessary to promote ATG18 binding to ATG9 through phosphorylation of ATG9. Catalyzes phosphorylation of ATG4, decreasing the interaction between ATG4 and ATG8 and impairing deconjugation of PE-conjugated forms of ATG8. The sequence is that of Serine/threonine-protein kinase ATG1 from Kluyveromyces marxianus (strain DMKU3-1042 / BCC 29191 / NBRC 104275) (Yeast).